Consider the following 469-residue polypeptide: MVHTASGREVRHGLEDDDADTICAMATPSGQGGVAVVRVSGSRALEVAEEVAGPLPAPREAGLRRFRDARGETLDHGLVLVFPGPGSYTGEDVVELQGHGSPAAVTAVLEALCAAGARPAGPGEFSERAFLNGRLDLTQAEAVASLIEAETDGARRAALRALSGAFGQRVDGLADRMIDLRALIEAFLDFPEDEDVPADPPELAAEIEALGSELAEIRRRAAAGVRFGEGIRVALVGPPNAGKSSLLNVLSGEEAAIVSAQAGTTRDVVRQWAALGSRHAELLDTAGLRDAEAQDEIEAEGARRARAAASEADLLLVVIEAGKTLDEELRARIAEQAPRPVVVIVNKIDASGDEAGWEGESEVGAHVRRARVSAHTGAGIEALRRGLAALVDREAGEDAWAARHRHIEALDRAGEELEEALVVARRGGQEELVAEALRRAQTALGEITGRVSHEALLGRIFSGFCIGKE.

Positions 38, 95, and 134 each coordinate (6S)-5-formyl-5,6,7,8-tetrahydrofolate. Residues 230 to 392 (GIRVALVGPP…LRRGLAALVD (163 aa)) form the TrmE-type G domain. Residues 240–245 (NAGKSS), 259–265 (SAQAGTT), and 284–287 (DTAG) each bind GTP. Mg(2+)-binding residues include serine 244 and threonine 265. (6S)-5-formyl-5,6,7,8-tetrahydrofolate is bound at residue lysine 468.

The protein belongs to the TRAFAC class TrmE-Era-EngA-EngB-Septin-like GTPase superfamily. TrmE GTPase family. Homodimer. Heterotetramer of two MnmE and two MnmG subunits. K(+) serves as cofactor.

Its subcellular location is the cytoplasm. Exhibits a very high intrinsic GTPase hydrolysis rate. Involved in the addition of a carboxymethylaminomethyl (cmnm) group at the wobble position (U34) of certain tRNAs, forming tRNA-cmnm(5)s(2)U34. The protein is tRNA modification GTPase MnmE of Halorhodospira halophila (strain DSM 244 / SL1) (Ectothiorhodospira halophila (strain DSM 244 / SL1)).